Reading from the N-terminus, the 189-residue chain is HGPRTase-like protein 2 (189 aa).

It belongs to the purine/pyrimidine phosphoribosyltransferase family. Archaeal HPRT subfamily.

Functionally, may catalyze a purine salvage reaction, the substrate is unknown. In Haloarcula marismortui (strain ATCC 43049 / DSM 3752 / JCM 8966 / VKM B-1809) (Halobacterium marismortui), this protein is HGPRTase-like protein 2.